Here is a 251-residue protein sequence, read N- to C-terminus: Sugar fermentation stimulation protein homolog (251 aa).

Belongs to the SfsA family.

The polypeptide is Sugar fermentation stimulation protein homolog (Prochlorococcus marinus (strain MIT 9313)).